Reading from the N-terminus, the 189-residue chain is Protein GrpE (189 aa).

Residues 1 to 24 form a disordered region; that stretch reads MADEQTVDTQNPEANQAPEASGDD.

This sequence belongs to the GrpE family. As to quaternary structure, homodimer.

The protein resides in the cytoplasm. Functionally, participates actively in the response to hyperosmotic and heat shock by preventing the aggregation of stress-denatured proteins, in association with DnaK and GrpE. It is the nucleotide exchange factor for DnaK and may function as a thermosensor. Unfolded proteins bind initially to DnaJ; upon interaction with the DnaJ-bound protein, DnaK hydrolyzes its bound ATP, resulting in the formation of a stable complex. GrpE releases ADP from DnaK; ATP binding to DnaK triggers the release of the substrate protein, thus completing the reaction cycle. Several rounds of ATP-dependent interactions between DnaJ, DnaK and GrpE are required for fully efficient folding. The polypeptide is Protein GrpE (Pseudomonas fluorescens (strain Pf0-1)).